Consider the following 185-residue polypeptide: dTTP/UTP pyrophosphatase (185 aa).

The Proton acceptor role is filled by aspartate 64.

The protein belongs to the Maf family. YhdE subfamily. The cofactor is a divalent metal cation.

The protein resides in the cytoplasm. It carries out the reaction dTTP + H2O = dTMP + diphosphate + H(+). It catalyses the reaction UTP + H2O = UMP + diphosphate + H(+). Nucleoside triphosphate pyrophosphatase that hydrolyzes dTTP and UTP. May have a dual role in cell division arrest and in preventing the incorporation of modified nucleotides into cellular nucleic acids. The protein is dTTP/UTP pyrophosphatase of Thermococcus gammatolerans (strain DSM 15229 / JCM 11827 / EJ3).